Reading from the N-terminus, the 343-residue chain is 3-dehydroquinate synthase (343 aa).

NAD(+) is bound by residues S61–K66, G95–D99, T119–T120, K132, K141, and F159–T162. Zn(2+) contacts are provided by E174, H231, and H248.

Belongs to the sugar phosphate cyclases superfamily. Dehydroquinate synthase family. The cofactor is Co(2+). Requires Zn(2+) as cofactor. NAD(+) serves as cofactor.

The protein localises to the cytoplasm. It carries out the reaction 7-phospho-2-dehydro-3-deoxy-D-arabino-heptonate = 3-dehydroquinate + phosphate. It participates in metabolic intermediate biosynthesis; chorismate biosynthesis; chorismate from D-erythrose 4-phosphate and phosphoenolpyruvate: step 2/7. Its function is as follows. Catalyzes the conversion of 3-deoxy-D-arabino-heptulosonate 7-phosphate (DAHP) to dehydroquinate (DHQ). This is 3-dehydroquinate synthase from Helicobacter pylori (strain HPAG1).